The sequence spans 468 residues: Methionine aminopeptidase 2 (468 aa).

A compositionally biased stretch (basic and acidic residues) spans 63–74 (AAKEATKKDAKG). The segment at 63-87 (AAKEATKKDAKGGKGKANGSAAATA) is disordered. Histidine 219 contacts substrate. The a divalent metal cation site is built by aspartate 239, aspartate 250, and histidine 319. Position 327 (histidine 327) interacts with substrate. Residues glutamate 352 and glutamate 449 each contribute to the a divalent metal cation site.

The protein belongs to the peptidase M24A family. Methionine aminopeptidase eukaryotic type 2 subfamily. Co(2+) is required as a cofactor. Requires Zn(2+) as cofactor. It depends on Mn(2+) as a cofactor. Fe(2+) serves as cofactor.

It is found in the cytoplasm. The enzyme catalyses Release of N-terminal amino acids, preferentially methionine, from peptides and arylamides.. With respect to regulation, inhibited by the fumagillin analog, TNP-470. In terms of biological role, cotranslationally removes the N-terminal methionine from nascent proteins. The N-terminal methionine is often cleaved when the second residue in the primary sequence is small and uncharged (Met-Ala-, Cys, Gly, Pro, Ser, Thr, or Val). Required for germ cell proliferation and/or differentiation. In Caenorhabditis elegans, this protein is Methionine aminopeptidase 2.